We begin with the raw amino-acid sequence, 73 residues long: UPF0346 protein LVIS_0790 (73 aa).

The protein belongs to the UPF0346 family.

The protein is UPF0346 protein LVIS_0790 of Levilactobacillus brevis (strain ATCC 367 / BCRC 12310 / CIP 105137 / JCM 1170 / LMG 11437 / NCIMB 947 / NCTC 947) (Lactobacillus brevis).